A 331-amino-acid polypeptide reads, in one-letter code: MTSRSVCEKMTMTTENPNQTVVSHFFLEGLRYTAKHSSLFFLLFLLIYSITVAGNLLILLTVGSDSHLSLPMYHFLGHLSFLDACLSTVTVPKVMAGLLTLDGKVISFEGCAVQLYCFHFLASTECFLYTVMAYDRYLAICQPLHYPVAMNRRMCAEMAGITWAIGATHAAIHTSLTFRLLYCGPCHIAYFFCDIPPVLKLACTDTTINELVMLASIGIVAAGCLILIVISYIFIVAAVLRIRTAQGRQRAFSPCTAQLTGVLLYYVPPVCIYLQPRSSEAGAGAPAVFYTIVTPMLNPFIYTLRNKEVKHALQRLLCSSFRESTAGSPPP.

Over methionine 1–serine 38 the chain is Extracellular. N-linked (GlcNAc...) asparagine glycosylation is present at asparagine 18. Residues leucine 39–leucine 59 traverse the membrane as a helical segment. Residues leucine 60–histidine 67 lie on the Cytoplasmic side of the membrane. A helical membrane pass occupies residues leucine 68 to threonine 88. Over valine 89–valine 113 the chain is Extracellular. A disulfide bond links cysteine 111 and cysteine 203. A helical membrane pass occupies residues glutamine 114–tyrosine 134. Topologically, residues aspartate 135–arginine 153 are cytoplasmic. The helical transmembrane segment at methionine 154–threonine 174 threads the bilayer. The Extracellular segment spans residues serine 175–leucine 211. Residues valine 212 to serine 231 form a helical membrane-spanning segment. The Cytoplasmic portion of the chain corresponds to tyrosine 232–alanine 251. A helical transmembrane segment spans residues phenylalanine 252–isoleucine 272. At tyrosine 273–alanine 283 the chain is on the extracellular side. The helical transmembrane segment at glycine 284–leucine 304 threads the bilayer. Topologically, residues arginine 305–proline 331 are cytoplasmic.

The protein belongs to the G-protein coupled receptor 1 family.

It is found in the cell membrane. Functionally, odorant receptor. The chain is Olfactory receptor 10S1 (OR10S1) from Homo sapiens (Human).